A 120-amino-acid polypeptide reads, in one-letter code: Cytochrome c6 (120 aa).

The N-terminal stretch at 1–35 is a signal peptide; sequence MFKLFNQASRIFFGIALPCLIFLGGIFSLGNTALA. Heme c-binding residues include Cys49, Cys52, His53, and Met93.

The protein belongs to the cytochrome c family. PetJ subfamily. Monomer. Binds 1 heme c group covalently per subunit.

The protein localises to the cellular thylakoid lumen. In terms of biological role, functions as an electron carrier between membrane-bound cytochrome b6-f and photosystem I in oxygenic photosynthesis. In Synechocystis sp. (strain ATCC 27184 / PCC 6803 / Kazusa), this protein is Cytochrome c6 (petJ).